The sequence spans 514 residues: MMTPLNIALIHPDLGIGGAERLVVDAAIGLQDQGHRVTIYTSHCDKNHCFEEIKRGDLKVVVVGDFLPTNILGKFFILCANLRQLALVFKLVINGSIDKHDLFIVDQLSTCVPLLHLFSASGRVLFYCHFPDQLLAQRKSLVSKLYRVPFDLLEQLTMGCSDSVVVNSYFTRSVFFDTFKILRLNPRVVYPCVAMDELPIEKIDIGFYDQIIGPNNRYYLSINRFERKKDIALALNAFKASKEGHSSDTKLIICGGYDSRVAENVEYLSELQLICEKANIAHVTIFYSEFSRTPEHYTFPTGVREKKVIFLASISSSLKELLLKKAQLLLYTPSREHFGIVPLEAMKHGTPVLAVDNGGPLETVVTLKSDNQDTATGWLRRADAGIWAEAIDEQAEYVKKNPGIFATNGPKWVKDKFSRDAMTSSFLHNIDNIFMTDRVIQPWAVMVILAASYILWRSSHVFGDACRYIYLLTGGILVLRSRYLLAIFWVLLFVMQPQLSVGVDTITATLKPKL.

N94 carries N-linked (GlcNAc...) asparagine glycosylation. 2 helical membrane passes run 443 to 463 and 468 to 490; these read WAVMVILAASYILWRSSHVFG and YIYLLTGGILVLRSRYLLAIFWV.

The protein belongs to the glycosyltransferase group 1 family.

It localises to the endoplasmic reticulum membrane. It catalyses the reaction a beta-D-Man-(1-&gt;4)-beta-D-GlcNAc-(1-&gt;4)-alpha-D-GlcNAc-diphospho-di-trans,poly-cis-dolichol + GDP-alpha-D-mannose = an alpha-D-Man-(1-&gt;3)-beta-D-Man-(1-&gt;4)-beta-D-GlcNAc-(1-&gt;4)-alpha-D-GlcNAc-diphospho-di-trans,poly-cis-dolichol + GDP + H(+). It carries out the reaction an alpha-D-Man-(1-&gt;3)-beta-D-Man-(1-&gt;4)-beta-D-GlcNAc-(1-&gt;4)-alpha-D-GlcNAc-diphospho-di-trans,poly-cis-dolichol + GDP-alpha-D-mannose = an alpha-D-Man-(1-&gt;3)-[alpha-D-Man-(1-&gt;6)]-beta-D-Man-(1-&gt;4)-beta-D-GlcNAc-(1-&gt;4)-alpha-D-GlcNAc-diphospho-di-trans,poly-cis-dolichol + GDP + H(+). It functions in the pathway protein modification; protein glycosylation. In terms of biological role, mannosylates Man(2)GlcNAc(2)-dolichol diphosphate and Man(1)GlcNAc(2)-dolichol diphosphate to form Man(3)GlcNAc(2)-dolichol diphosphate. This Eremothecium gossypii (strain ATCC 10895 / CBS 109.51 / FGSC 9923 / NRRL Y-1056) (Yeast) protein is Alpha-1,3/1,6-mannosyltransferase ALG2 (ALG2).